Reading from the N-terminus, the 688-residue chain is MGQEKLYIEKELSWLSFNERVLQEAADKSNPLIERMRFLGIYSNNLDEFYKVRFAELKRRIIISEEQGSNSHSRHLLGKIQSRVLKADQEFDGLYNELLLEMARNQIFLINERQLSVNQQNWLRHYFKQYLRQHITPILINPDTDLVQFLKDDYTYLAVEIIRGDTIRYALLEIPSDKVPRFVNLPPEAPRRRKPMILLDNILRYCLDDIFKGFFDYDALNAYSMKMTRDAEYDLVHEMEASLMELMSSSLKQRLTAEPVRFVYQRDMPNALVEVLREKLTISRYDSIVPGGRYHNFKDFINFPNVGKANLVNKPLPRLRHIWFDKAQFRNGFDAIRERDVLLYYPYHTFEHVLELLRQASFDPSVLAIKINIYRVAKDSRIIDSMIHAAHNGKKVTVVVELQARFDEEANIHWAKRLTEAGVHVIFSAPGLKIHAKLFLISRKENGEVVRYAHIGTGNFNEKTARLYTDYSLLTADARITNEVRRVFNFIENPYRPVTFDYLMVSPQNSRRLLYEMVDREIANAQQGLPSGITLKLNNLVDKGLVDRLYAASSSGVPVNLLVRGMCSLIPNLEGISDNIRAISIVDRYLEHDRVYIFENGGDKKVYLSSADWMTRNIDYRIEVATPLLDPRLKQRVLDIIDILFSDTVKARYIDKELSNRYVPRGNRRKVRAQLAIYDYIKSLEQPE.

Residue asparagine 45 participates in ATP binding. Positions 375 and 405 each coordinate Mg(2+). Residues proline 430 to threonine 464 form the PLD phosphodiesterase domain. The active-site Phosphohistidine intermediate is histidine 435. ATP is bound by residues tyrosine 468, arginine 564, and histidine 592.

The protein belongs to the polyphosphate kinase 1 (PPK1) family. Requires Mg(2+) as cofactor. In terms of processing, an intermediate of this reaction is the autophosphorylated ppk in which a phosphate is covalently linked to a histidine residue through a N-P bond.

The catalysed reaction is [phosphate](n) + ATP = [phosphate](n+1) + ADP. In terms of biological role, catalyzes the reversible transfer of the terminal phosphate of ATP to form a long-chain polyphosphate (polyP). In Escherichia coli O157:H7, this protein is Polyphosphate kinase.